A 355-amino-acid polypeptide reads, in one-letter code: UDP-3-O-acylglucosamine N-acyltransferase (355 aa).

Catalysis depends on H258, which acts as the Proton acceptor.

The protein belongs to the transferase hexapeptide repeat family. LpxD subfamily. In terms of assembly, homotrimer.

The catalysed reaction is a UDP-3-O-[(3R)-3-hydroxyacyl]-alpha-D-glucosamine + a (3R)-hydroxyacyl-[ACP] = a UDP-2-N,3-O-bis[(3R)-3-hydroxyacyl]-alpha-D-glucosamine + holo-[ACP] + H(+). The protein operates within bacterial outer membrane biogenesis; LPS lipid A biosynthesis. In terms of biological role, catalyzes the N-acylation of UDP-3-O-acylglucosamine using 3-hydroxyacyl-ACP as the acyl donor. Is involved in the biosynthesis of lipid A, a phosphorylated glycolipid that anchors the lipopolysaccharide to the outer membrane of the cell. This is UDP-3-O-acylglucosamine N-acyltransferase from Rhizobium rhizogenes (strain K84 / ATCC BAA-868) (Agrobacterium radiobacter).